A 210-amino-acid polypeptide reads, in one-letter code: Ribosomal RNA large subunit methyltransferase E (210 aa).

The S-adenosyl-L-methionine site is built by G67, W69, D87, D103, and D128. Catalysis depends on K168, which acts as the Proton acceptor.

Belongs to the class I-like SAM-binding methyltransferase superfamily. RNA methyltransferase RlmE family.

It localises to the cytoplasm. The enzyme catalyses uridine(2552) in 23S rRNA + S-adenosyl-L-methionine = 2'-O-methyluridine(2552) in 23S rRNA + S-adenosyl-L-homocysteine + H(+). Functionally, specifically methylates the uridine in position 2552 of 23S rRNA at the 2'-O position of the ribose in the fully assembled 50S ribosomal subunit. The sequence is that of Ribosomal RNA large subunit methyltransferase E from Psychrobacter cryohalolentis (strain ATCC BAA-1226 / DSM 17306 / VKM B-2378 / K5).